The following is a 219-amino-acid chain: Phosphatidylinositol phosphate synthase (219 aa).

29-32 (NQLT) serves as a coordination point for a CDP-1,2-diacyl-sn-glycerol. A run of 2 helical transmembrane segments spans residues 31–47 (LTLVSAGLTVGVALLLI) and 53–72 (IWAAVLTGLFAAFDMIDGTV). D66 and D69 together coordinate Mg(2+). A CDP-1,2-diacyl-sn-glycerol contacts are provided by G70, R74, and T80. D87 and D91 together coordinate Mg(2+). D91 functions as the Proton acceptor in the catalytic mechanism. The next 4 helical transmembrane spans lie at 93–110 (ITDGALFGAITWWLVYSY), 116–133 (LVAASLVCLVASQVISYV), 154–171 (RLIVSLVGLGLTGMGVPY), and 177–194 (LWALAAGSIYTVVQRLVM).

The protein belongs to the CDP-alcohol phosphatidyltransferase class-I family. As to quaternary structure, homodimer. It depends on Mg(2+) as a cofactor.

The protein localises to the cell membrane. It carries out the reaction a CDP-1,2-diacyl-sn-glycerol + 1D-myo-inositol 3-phosphate = a 1,2-diacyl-sn-glycero-3-phospho-(1D-myo-inositol-3-phosphate) + CMP + H(+). The catalysed reaction is 1,2-di-(9Z-octadecenoyl)-sn-glycero-3-cytidine-5'-diphosphate + 1D-myo-inositol 3-phosphate = 1,2-di-(9Z-octadecenoyl)-sn-glycero-3-phospho-(1D-myo-inositol-3-phosphate) + CMP + H(+). Its pathway is phospholipid metabolism; phosphatidylinositol phosphate biosynthesis. Catalyzes the conjugation of the 1'-hydroxyl group of D-myo-inositol-3-phosphate (also named L-myo-inositol-1-phosphate) with a lipid tail of cytidine diphosphate diacylglycerol (CDP-DAG), forming phosphatidylinositol phosphate (PIP) and CMP. PIP is a precursor of phosphatidylinositol (PI) which is an essential lipid required for cell wall formation. The chain is Phosphatidylinositol phosphate synthase from Corynebacterium glutamicum (strain ATCC 13032 / DSM 20300 / JCM 1318 / BCRC 11384 / CCUG 27702 / LMG 3730 / NBRC 12168 / NCIMB 10025 / NRRL B-2784 / 534).